The following is a 205-amino-acid chain: Proteasome subunit beta type-3 (205 aa).

The residue at position 31 (Ser31) is a Phosphoserine. Lys70 is covalently cross-linked (Glycyl lysine isopeptide (Lys-Gly) (interchain with G-Cter in ubiquitin)).

It belongs to the peptidase T1B family. The 26S proteasome consists of a 20S proteasome core and two 19S regulatory subunits. The 20S proteasome core is composed of 28 subunits that are arranged in four stacked rings, resulting in a barrel-shaped structure. The two end rings are each formed by seven alpha subunits, and the two central rings are each formed by seven beta subunits. The catalytic chamber with the active sites is on the inside of the barrel.

It localises to the cytoplasm. The protein resides in the nucleus. Non-catalytic component of the proteasome which degrades poly-ubiquitinated proteins in the cytoplasm and in the nucleus. It is essential for the regulated turnover of proteins and for the removal of misfolded proteins. The proteasome is a multicatalytic proteinase complex that is characterized by its ability to cleave peptides with Arg, Phe, Tyr, Leu, and Glu adjacent to the leaving group at neutral or slightly basic pH. It has an ATP-dependent proteolytic activity. This subunit may participate in the trypsin-like activity of the enzyme complex. In Saccharomyces cerevisiae (strain ATCC 204508 / S288c) (Baker's yeast), this protein is Proteasome subunit beta type-3 (PUP3).